The chain runs to 247 residues: V-type proton ATPase subunit D (247 aa).

The protein belongs to the V-ATPase D subunit family. V-ATPase is a heteromultimeric enzyme made up of two complexes: the ATP-hydrolytic V1 complex and the proton translocation V0 complex. The V1 complex consists of three catalytic AB heterodimers that form a heterohexamer, three peripheral stalks each consisting of EG heterodimers, one central rotor including subunits D and F, and the regulatory subunits C and H. The proton translocation complex V0 consists of the proton transport subunit a, a ring of proteolipid subunits c9c'', rotary subunit d, subunits e and f, and the accessory subunits ATP6AP1/Ac45 and ATP6AP2/PRR. Interacts with SNX10.

The protein resides in the membrane. It localises to the cytoplasmic vesicle. The protein localises to the clathrin-coated vesicle membrane. Its subcellular location is the cytoplasm. It is found in the cytoskeleton. The protein resides in the microtubule organizing center. It localises to the centrosome. The protein localises to the cell projection. Its subcellular location is the cilium. Its function is as follows. Subunit of the V1 complex of vacuolar(H+)-ATPase (V-ATPase), a multisubunit enzyme composed of a peripheral complex (V1) that hydrolyzes ATP and a membrane integral complex (V0) that translocates protons. V-ATPase is responsible for acidifying and maintaining the pH of intracellular compartments and in some cell types, is targeted to the plasma membrane, where it is responsible for acidifying the extracellular environment. May play a role in cilium biogenesis through regulation of the transport and the localization of proteins to the cilium. The polypeptide is V-type proton ATPase subunit D (Atp6v1d) (Mus musculus (Mouse)).